A 147-amino-acid polypeptide reads, in one-letter code: Receptor activity-modifying protein 3 (147 aa).

The first 22 residues, M1–A22, serve as a signal peptide directing secretion. At Q23 to D112 the chain is on the extracellular side. Residues N28, N57, N70, and N102 are each glycosylated (N-linked (GlcNAc...) asparagine). 2 disulfides stabilise this stretch: C39–C71 and C56–C103. A helical transmembrane segment spans residues P113–V137. The Cytoplasmic segment spans residues W138–L147.

The protein belongs to the RAMP family. Heterodimer of CALCRL and RAMP3; interaction induces allosteric modulation of CALCRL function and ligand specificity for adrenomedullin/ADM and intermedin/ADM2. Heterodimer of CALCR and RAMP3; interaction form the receptor complex AMYR3 for amylin/IAPP. Interacts with GPER1. Expressed predominantly in the testis, embryonic and adult brain and in kidney.

Its subcellular location is the cell membrane. It is found in the membrane. Accessory protein that interacts with and modulates the function of G-protein coupled receptors including calcitonin gene-related peptide type 1 receptor (CALCRL), calcitonin receptor (CALCR) and G-protein coupled estrogen receptor 1 (GPER1). Required for the transport of CALCRL and GPER1 receptors to the plasma membrane. Plays a role in cardioprotection by reducing cardiac hypertrophy and perivascular fibrosis in a GPER1-dependent manner. Together with CALCRL, form a receptor complex for adrenomedullin/ADM and intermedin/ADM2. Together with CALCR, act as a receptor complex for amylin/IAPP. This chain is Receptor activity-modifying protein 3, found in Mus musculus (Mouse).